The following is a 238-amino-acid chain: Probable transglycosylase SceD 3 (238 aa).

An N-terminal signal peptide occupies residues 1-27 (MKKTVVASTLAVGLGVTGFAAGNSADA). The segment at 82–161 (YGQGSTNAPA…SEASEGSSVN (80 aa)) is disordered. A compositionally biased stretch (low complexity) spans 89-156 (APAQETAEQP…NESSSSEASE (68 aa)).

Belongs to the transglycosylase family. SceD subfamily.

It is found in the secreted. In terms of biological role, is able to cleave peptidoglycan and affects clumping and separation of bacterial cells. The sequence is that of Probable transglycosylase SceD 3 (sceD3) from Staphylococcus saprophyticus subsp. saprophyticus (strain ATCC 15305 / DSM 20229 / NCIMB 8711 / NCTC 7292 / S-41).